The following is a 367-amino-acid chain: DNA replication and repair protein RecF (367 aa).

ATP is bound at residue 30-37 (GANGSGKT).

This sequence belongs to the RecF family.

The protein resides in the cytoplasm. Functionally, the RecF protein is involved in DNA metabolism; it is required for DNA replication and normal SOS inducibility. RecF binds preferentially to single-stranded, linear DNA. It also seems to bind ATP. This is DNA replication and repair protein RecF from Pseudomonas fluorescens (strain Pf0-1).